We begin with the raw amino-acid sequence, 211 residues long: Arginine exporter protein ArgO (211 aa).

6 helical membrane-spanning segments follow: residues 1–21 (MFTYYFQGLALGAAMILPLGP), 37–57 (LMIALLCAVSDLLLICAGIFG), 68–88 (LLAIVTWGGVAFLLWYGFGAL), 111–131 (IIITMLAVTWLNPHVYLDTFV), 147–167 (WFALGTISASFLWFFGLALLA), and 182–202 (IINIVVGAVMWFIAFQLAKEG).

It belongs to the LysE/ArgO transporter (TC 2.A.75) family.

The protein localises to the cell inner membrane. It catalyses the reaction L-arginine(in) = L-arginine(out). In terms of biological role, involved in the export of arginine. Important to control the intracellular level of arginine and the correct balance between arginine and lysine. The polypeptide is Arginine exporter protein ArgO (Klebsiella pneumoniae (strain 342)).